The sequence spans 314 residues: tRNA dimethylallyltransferase (314 aa).

12–19 contacts ATP; sequence GPTGTGKS. 14-19 contributes to the substrate binding site; that stretch reads TGTGKS.

Belongs to the IPP transferase family. As to quaternary structure, monomer. Mg(2+) is required as a cofactor.

It catalyses the reaction adenosine(37) in tRNA + dimethylallyl diphosphate = N(6)-dimethylallyladenosine(37) in tRNA + diphosphate. Its function is as follows. Catalyzes the transfer of a dimethylallyl group onto the adenine at position 37 in tRNAs that read codons beginning with uridine, leading to the formation of N6-(dimethylallyl)adenosine (i(6)A). The sequence is that of tRNA dimethylallyltransferase from Mycolicibacterium paratuberculosis (strain ATCC BAA-968 / K-10) (Mycobacterium paratuberculosis).